The chain runs to 251 residues: MSPDPKYSAYLLDIEGTLCPLSFVKDTLYPFFVLHVQRIVYENFNEEHPKDEFIAEQLAKYDIKEEGQAGKNKLVEHLLDLVANDTKDSTLKALQGHVWEVGYNSGELEVPLYPDVIDFLVRNDGRGDDKVPVYIYSSGSIHAQKLLFGHVKNSGNSHAKIAGNWDLNRFIDGYFDINTAGKKTESNSYKKILDEIKMTDKPHDVLFLSDNAKELDAAKECGISVGLAMRAGNVTVPNAIDYKQYFQFTKL.

Mg(2+) is bound by residues aspartate 13 and glutamate 15. Residues 137–138 (SS) and lysine 183 contribute to the substrate site. Residue aspartate 210 coordinates Mg(2+).

It belongs to the HAD-like hydrolase superfamily. MasA/MtnC family. As to quaternary structure, monomer. Mg(2+) serves as cofactor.

The protein localises to the cytoplasm. Its subcellular location is the nucleus. It catalyses the reaction 5-methylsulfanyl-2,3-dioxopentyl phosphate + H2O = 1,2-dihydroxy-5-(methylsulfanyl)pent-1-en-3-one + phosphate. It functions in the pathway amino-acid biosynthesis; L-methionine biosynthesis via salvage pathway; L-methionine from S-methyl-5-thio-alpha-D-ribose 1-phosphate: step 3/6. Its pathway is amino-acid biosynthesis; L-methionine biosynthesis via salvage pathway; L-methionine from S-methyl-5-thio-alpha-D-ribose 1-phosphate: step 4/6. Its function is as follows. Bifunctional enzyme that catalyzes the enolization of 2,3-diketo-5-methylthiopentyl-1-phosphate (DK-MTP-1-P) into the intermediate 2-hydroxy-3-keto-5-methylthiopentenyl-1-phosphate (HK-MTPenyl-1-P), which is then dephosphorylated to form the acireductone 1,2-dihydroxy-3-keto-5-methylthiopentene (DHK-MTPene). This chain is Enolase-phosphatase E1, found in Candida glabrata (strain ATCC 2001 / BCRC 20586 / JCM 3761 / NBRC 0622 / NRRL Y-65 / CBS 138) (Yeast).